Consider the following 383-residue polypeptide: MKKFTYFTSEFVSPGHPDKISDQISDAILDACLKDDPNSRVACEVFCTTGLVVVGGEITTSTYIDVQDIVRKKIDEIGYRPGMGFDSNCGTLSCIHAQSPDIAMGVDIGGAGDQGIMFGGAVRETEELMPLALVLSREILVKLTNMMKSNEIEWARPDQKSQVTLAYDENGKVDHVDSIVVSVQHDEDTTHDEIEKIVIEKVVKPVLEKYNLSSDNIKYYINPTGRFVIGGPHGDTGVTGRKIIVDTYGGYFKHGGGAFSGKDPSKVDRSAAYAARWVAKNIVAAELADKCEIQLSYAIGVPKPVSVKVDTFGTSKVDEDKISEAVSKVFDLSPRGIEKALELREGNFKYQDLAAFGHIGRTDIDTPWERLNKVDELKKAIEL.

Residue His16 participates in ATP binding. Residue Asp18 coordinates Mg(2+). Glu44 is a K(+) binding site. L-methionine-binding residues include Glu57 and Gln98. The flexible loop stretch occupies residues 98–108 (QSPDIAMGVDI). ATP-binding positions include 158 to 160 (DQK), 226 to 227 (RF), Asp235, 241 to 242 (RK), Ala258, and Lys262. Asp235 serves as a coordination point for L-methionine. Position 266 (Lys266) interacts with L-methionine.

Belongs to the AdoMet synthase family. As to quaternary structure, homotetramer; dimer of dimers. The cofactor is Mg(2+). Requires K(+) as cofactor.

The protein localises to the cytoplasm. It catalyses the reaction L-methionine + ATP + H2O = S-adenosyl-L-methionine + phosphate + diphosphate. It participates in amino-acid biosynthesis; S-adenosyl-L-methionine biosynthesis; S-adenosyl-L-methionine from L-methionine: step 1/1. Functionally, catalyzes the formation of S-adenosylmethionine (AdoMet) from methionine and ATP. The overall synthetic reaction is composed of two sequential steps, AdoMet formation and the subsequent tripolyphosphate hydrolysis which occurs prior to release of AdoMet from the enzyme. The polypeptide is S-adenosylmethionine synthase (Fusobacterium nucleatum subsp. nucleatum (strain ATCC 25586 / DSM 15643 / BCRC 10681 / CIP 101130 / JCM 8532 / KCTC 2640 / LMG 13131 / VPI 4355)).